Reading from the N-terminus, the 244-residue chain is N-(5'-phosphoribosyl)anthranilate isomerase 3, chloroplastic (244 aa).

The N-terminal 32 residues, 1–32, are a transit peptide targeting the chloroplast; the sequence is MSTGISSDLHLHPRALNFSKTSKSGLSNRKVS.

The protein belongs to the TrpF family.

The protein localises to the plastid. It is found in the chloroplast. The enzyme catalyses N-(5-phospho-beta-D-ribosyl)anthranilate = 1-(2-carboxyphenylamino)-1-deoxy-D-ribulose 5-phosphate. Its pathway is amino-acid biosynthesis; L-tryptophan biosynthesis; L-tryptophan from chorismate: step 3/5. This Arabidopsis thaliana (Mouse-ear cress) protein is N-(5'-phosphoribosyl)anthranilate isomerase 3, chloroplastic (PAI3).